The following is a 549-amino-acid chain: Zinc finger protein 382 (549 aa).

Residues 1–105 (MNCHSVPLQG…DKPPTSIVII (105 aa)) form a mediates interaction with TRIM28 region. Represses transcription regions lie at residues 10–51 (GPVS…FISV) and 75–210 (MFPS…PEQR). Residues 12–83 (VSFKDVTVDF…RMFPSQSYLE (72 aa)) form the KRAB domain. C2H2-type zinc fingers lie at residues 211–233 (FECDECDSSFLMTEVAFPHDRAH), 295–317 (FQCPYCGNSFRRKSYLIEHQRIH), 323–345 (YICSQCGKAFRQKTALTLHEKTH), 351–373 (YLCVDCGKSFRQKATLTRHHKTH), 379–401 (YECTQCGSAFGKKSYLIDHQRTH), 407–429 (YQCAECGKAFIQKTTLTVHQRTH), 435–457 (YMCSECGKSFCQKTTLTLHQRIH), 463–485 (YVCSDCGKSFRQKAILTVHYRIH), 491–513 (NGCPQCGKAFSRKSNLIRHQKTH), and 519–541 (YECHECGKFFSCKSNLVAHQKTH). A required for transcriptional repression activity; probably mediates sequence-specific DNA-binding region spans residues 295 to 549 (FQCPYCGNSF…THKAETVRFQ (255 aa)).

The protein belongs to the krueppel C2H2-type zinc-finger protein family. Interacts with TRIM28; enhances the transcriptional repressor activity. In terms of tissue distribution, ubiquitously expressed with higher expression in lung, kidney and testis.

Its subcellular location is the nucleus. Functions as a sequence-specific transcriptional repressor. This chain is Zinc finger protein 382 (Znf382), found in Rattus norvegicus (Rat).